Reading from the N-terminus, the 103-residue chain is Serine rich endogenous peptide 9 (103 aa).

Residues 1–25 form the signal peptide; that stretch reads MENIFFSKLTQVFIVALLCIFIYRT. Positions 54–103 are disordered; that stretch reads IYVKPPPLKSKDSNQKGKRGETYYKPNSEIGTGPSHSGHGGSSIEHVSSP. Residues 62–75 show a composition bias toward basic and acidic residues; sequence KSKDSNQKGKRGET. An SCOOP motif motif is present at residues 82–96; sequence EIGTGPSHSGHGGSS. The span at 84–103 shows a compositional bias: low complexity; it reads GTGPSHSGHGGSSIEHVSSP. The SxS motif essential for MIK2 binding motif lies at 88–90; the sequence is SHS.

The protein belongs to the serine rich endogenous peptide (SCOOP) phytocytokine family. Interacts with MIK2 (via extracellular leucine-rich repeat domain); this interaction triggers the formation of complex between MIK2 and the BAK1/SERK3 and SERK4 coreceptors, and subsequent BAK1 activation by phosphorylation. As to expression, mostly expressed in seedlings shoots and roots, and, to a lower extent, in leaves, but barely in flowers.

It localises to the cell membrane. It is found in the secreted. Its subcellular location is the extracellular space. The protein resides in the apoplast. In terms of biological role, brassicaceae-specific phytocytokine (plant endogenous peptide released into the apoplast) perceived by MIK2 in a BAK1/SERK3 and SERK4 coreceptors-dependent manner, that modulates various physiological and antimicrobial processes including growth prevention and reactive oxygen species (ROS) response regulation. This Arabidopsis thaliana (Mouse-ear cress) protein is Serine rich endogenous peptide 9.